The primary structure comprises 388 residues: L-lactate dehydrogenase (388 aa).

Residues 1–380 enclose the FMN hydroxy acid dehydrogenase domain; sequence MIISAASDYR…SADALSRVTR (380 aa). Y24 lines the substrate pocket. FMN-binding residues include S106 and Q127. Residue Y129 participates in substrate binding. T155 is an FMN binding site. A substrate-binding site is contributed by R164. Position 251 (K251) interacts with FMN. Catalysis depends on H275, which acts as the Proton acceptor. R278 is a substrate binding site. 306–330 contributes to the FMN binding site; it reads DSGIRSGLDVVRMLALGADAVLLGR.

Belongs to the FMN-dependent alpha-hydroxy acid dehydrogenase family. FMN serves as cofactor.

It localises to the cell inner membrane. It catalyses the reaction (S)-lactate + A = pyruvate + AH2. Functionally, catalyzes the conversion of L-lactate to pyruvate. Is coupled to the respiratory chain. The sequence is that of L-lactate dehydrogenase from Xanthomonas oryzae pv. oryzae (strain MAFF 311018).